The chain runs to 303 residues: GTPase Era (303 aa).

An Era-type G domain is found at 9–176; that stretch reads KSGFVSIIGR…VEQIVEHMEE (168 aa). The segment at 17–24 is G1; that stretch reads GRPNVGKS. 17–24 contributes to the GTP binding site; the sequence is GRPNVGKS. A G2 region spans residues 43–47; it reads QTTRN. Positions 64-67 are G3; that stretch reads DTPG. GTP contacts are provided by residues 64–68 and 126–129; these read DTPGI and NKID. The segment at 126-129 is G4; sequence NKID. Residues 155 to 157 form a G5 region; the sequence is ISA. The 86-residue stretch at 199–284 folds into the KH type-2 domain; that stretch reads IREKVLHLTK…YLELWVKVQK (86 aa).

Belongs to the TRAFAC class TrmE-Era-EngA-EngB-Septin-like GTPase superfamily. Era GTPase family. As to quaternary structure, monomer.

Its subcellular location is the cytoplasm. It localises to the cell membrane. Functionally, an essential GTPase that binds both GDP and GTP, with rapid nucleotide exchange. Plays a role in 16S rRNA processing and 30S ribosomal subunit biogenesis and possibly also in cell cycle regulation and energy metabolism. The sequence is that of GTPase Era from Shouchella clausii (strain KSM-K16) (Alkalihalobacillus clausii).